A 311-amino-acid chain; its full sequence is Ribosomal RNA small subunit methyltransferase H (311 aa).

S-adenosyl-L-methionine is bound by residues 39-41 (GGH), Asp-59, Phe-87, Asp-102, and His-109.

It belongs to the methyltransferase superfamily. RsmH family.

It localises to the cytoplasm. The catalysed reaction is cytidine(1402) in 16S rRNA + S-adenosyl-L-methionine = N(4)-methylcytidine(1402) in 16S rRNA + S-adenosyl-L-homocysteine + H(+). In terms of biological role, specifically methylates the N4 position of cytidine in position 1402 (C1402) of 16S rRNA. In Porphyromonas gingivalis (strain ATCC 33277 / DSM 20709 / CIP 103683 / JCM 12257 / NCTC 11834 / 2561), this protein is Ribosomal RNA small subunit methyltransferase H.